The following is a 158-amino-acid chain: Large ribosomal subunit protein uL11 (158 aa).

Residues 1-21 (MAQSVKTMVEGGKATTGPPIG) are disordered.

The protein belongs to the universal ribosomal protein uL11 family. As to quaternary structure, part of the ribosomal stalk of the 50S ribosomal subunit. Interacts with L10 and the large rRNA to form the base of the stalk. L10 forms an elongated spine to which L12 dimers bind in a sequential fashion forming a multimeric L10(L12)X complex.

Its function is as follows. Forms part of the ribosomal stalk which helps the ribosome interact with GTP-bound translation factors. This Thermoplasma volcanium (strain ATCC 51530 / DSM 4299 / JCM 9571 / NBRC 15438 / GSS1) protein is Large ribosomal subunit protein uL11.